Here is a 248-residue protein sequence, read N- to C-terminus: Sulfur carrier protein FdhD (248 aa).

Cys-99 functions as the Cysteine persulfide intermediate in the catalytic mechanism. Residue 232-237 participates in Mo-bis(molybdopterin guanine dinucleotide) binding; it reads FVRGKR.

Belongs to the FdhD family.

It localises to the cytoplasm. In terms of biological role, required for formate dehydrogenase (FDH) activity. Acts as a sulfur carrier protein that transfers sulfur from IscS to the molybdenum cofactor prior to its insertion into FDH. The chain is Sulfur carrier protein FdhD from Methanothermobacter thermautotrophicus (strain ATCC 29096 / DSM 1053 / JCM 10044 / NBRC 100330 / Delta H) (Methanobacterium thermoautotrophicum).